The chain runs to 355 residues: MADIPAQLVKQLREMTDAGMMDCKKALVETEGNLEKAVEYLREKGLSKAAKKADRIASEGIVSVEVANDFSKASIIEINSETDFVAKNDTFKELVAQTSKIVYDNALSSAQSLHTMSIGGVKFEEYLQQNIAKIGENIVVRRIASIEAQGKGIVNGYVHSNGRVGVLIAMKFDKESSKVACVELAKSICMHAAAMKPQVLSYTQLEYEFIQKEKVALIAELQKENEEFKRLGKPLHKIPQYISRSELTESVLQAQEQKLREDLKAQGKPEAIWDKILPGQMERFVADSTLLDQRLTLLGQFYVMDDKKTIAQVLEAKSKELGDEIEIIEYIRFELGEGIEKKVEDFAAEVAAQMQ.

The tract at residues T82–V85 is involved in Mg(2+) ion dislocation from EF-Tu.

Belongs to the EF-Ts family.

It is found in the cytoplasm. Its function is as follows. Associates with the EF-Tu.GDP complex and induces the exchange of GDP to GTP. It remains bound to the aminoacyl-tRNA.EF-Tu.GTP complex up to the GTP hydrolysis stage on the ribosome. In Helicobacter hepaticus (strain ATCC 51449 / 3B1), this protein is Elongation factor Ts.